A 351-amino-acid chain; its full sequence is Uroporphyrinogen decarboxylase (351 aa).

Residues 25 to 29, Phe43, Asp74, Tyr151, Ser206, and His325 each bind substrate; that span reads RQAGR.

Belongs to the uroporphyrinogen decarboxylase family. As to quaternary structure, homodimer.

The protein localises to the cytoplasm. It carries out the reaction uroporphyrinogen III + 4 H(+) = coproporphyrinogen III + 4 CO2. It participates in porphyrin-containing compound metabolism; protoporphyrin-IX biosynthesis; coproporphyrinogen-III from 5-aminolevulinate: step 4/4. In terms of biological role, catalyzes the decarboxylation of four acetate groups of uroporphyrinogen-III to yield coproporphyrinogen-III. This chain is Uroporphyrinogen decarboxylase, found in Chlorobaculum tepidum (strain ATCC 49652 / DSM 12025 / NBRC 103806 / TLS) (Chlorobium tepidum).